The chain runs to 297 residues: Acetaldehyde dehydrogenase (297 aa).

An NAD(+)-binding site is contributed by 15-18; the sequence is SGSI. Cysteine 130 serves as the catalytic Acyl-thioester intermediate. NAD(+) contacts are provided by residues 162 to 170 and asparagine 272; that span reads SAGIATREN.

The protein belongs to the acetaldehyde dehydrogenase family.

It catalyses the reaction acetaldehyde + NAD(+) + CoA = acetyl-CoA + NADH + H(+). This is Acetaldehyde dehydrogenase (mhpF) from Burkholderia thailandensis (strain ATCC 700388 / DSM 13276 / CCUG 48851 / CIP 106301 / E264).